Here is a 117-residue protein sequence, read N- to C-terminus: MSKTDLYEQLLTIEQQAKLTFDGITEMKAVLSKVLEENAELEIENKHLREHLQELQQTTEETDTKDLSQGLSKSKQNLQNLYEEGFHICPYFYGSRRENDEPCAFCNDVIYGERTAD.

The Zn(2+) site is built by H87, C89, C103, and C106.

This sequence belongs to the YabA family. In terms of assembly, homotetramer. Interacts with both DnaA and DnaN, acting as a bridge between these two proteins. Zn(2+) serves as cofactor.

Its subcellular location is the cytoplasm. It localises to the nucleoid. In terms of biological role, involved in control of chromosome replication initiation. Inhibits the cooperative binding of DnaA to the oriC region, thus negatively regulating initiation of chromosome replication. Inhibits the ability of DnaA-ATP to form a helix on DNA; does not disassemble preformed DnaA-DNA helices. Decreases the residence time of DnaA on the chromosome at its binding sites (oriC, replication forks and promoter-binding sites). Tethers DnaA to the replication machinery via the DNA polymerase beta sliding clamp subunit (dnaN). Associates with oriC and other DnaA targets on the chromosome in a DnaA-dependent manner. The polypeptide is Replication initiation control protein YabA (Latilactobacillus sakei subsp. sakei (strain 23K) (Lactobacillus sakei subsp. sakei)).